A 193-amino-acid polypeptide reads, in one-letter code: Pyridoxal 5'-phosphate synthase subunit PdxT (193 aa).

Glycine 48–serine 50 contributes to the L-glutamine binding site. The Nucleophile role is filled by cysteine 80. L-glutamine contacts are provided by residues arginine 107 and isoleucine 136–arginine 137. Catalysis depends on charge relay system residues histidine 172 and glutamate 174.

This sequence belongs to the glutaminase PdxT/SNO family. In the presence of PdxS, forms a dodecamer of heterodimers. Only shows activity in the heterodimer.

It catalyses the reaction aldehydo-D-ribose 5-phosphate + D-glyceraldehyde 3-phosphate + L-glutamine = pyridoxal 5'-phosphate + L-glutamate + phosphate + 3 H2O + H(+). It carries out the reaction L-glutamine + H2O = L-glutamate + NH4(+). Its pathway is cofactor biosynthesis; pyridoxal 5'-phosphate biosynthesis. In terms of biological role, catalyzes the hydrolysis of glutamine to glutamate and ammonia as part of the biosynthesis of pyridoxal 5'-phosphate. The resulting ammonia molecule is channeled to the active site of PdxS. In Clostridium botulinum (strain Loch Maree / Type A3), this protein is Pyridoxal 5'-phosphate synthase subunit PdxT.